A 1133-amino-acid polypeptide reads, in one-letter code: Roquin-1 (1133 aa).

7 residues coordinate Zn(2+): Cys-14, Cys-17, Cys-33, His-35, Cys-38, Cys-50, and Asp-53. An RING-type; degenerate zinc finger spans residues 14 to 54 (CPICTQTFDETIRKPISLGCGHTVCKMCLNKLHRKACPFDQ). An HEPN-N region spans residues 89-173 (GVEDTKHYEE…RTVTELILQH (85 aa)). Residues 174 to 326 (QNPQQLSSNL…MQSIIDKLQT (153 aa)) are ROQ. The HEPN-C stretch occupies residues 327–396 (PASFAQSVQE…VVHGLVDYIQ (70 aa)). The C3H1-type zinc-finger motif lies at 413–441 (KYKTYMCRDMKQRGGCPRGASCTFAHSQE). Phosphoserine occurs at positions 462, 531, 535, and 863. The tract at residues 505-542 (TQLIPRGTDPSYDSSLKPGKIDHLSSSAPGSPPDLLES) is disordered. 3 disordered regions span residues 1000-1019 (NTLA…WPGM), 1058-1078 (NTSK…PAED), and 1094-1133 (QENI…SSAP). The segment covering 1007-1016 (QPPPPPPPKW) has biased composition (pro residues). Residues 1058–1070 (NTSKQAENGQPEP) are compositionally biased toward polar residues. Low complexity predominate over residues 1096 to 1110 (NISLLSNKTSSLNLS). A Phosphoserine modification is found at Ser-1110. Residues 1119-1133 (NNDSQRSGVTPSSAP) show a composition bias toward polar residues.

As to quaternary structure, able to homodimerize. Interacts with DDX6 and EDC4. Interacts with CCR4-NOT deadenylase complex. Interacts with RC3H1; the interaction is RNA independent. In terms of processing, proteolytically cleaved after Arg-510 and Arg-579 by MALT1 in activated CD4(+) T cells; cleavage at Arg-510 and Arg-579 is critical for promoting RC3H1 degradation in response to T-cell receptor (TCR) stimulation, and hence is necessary for prolonging the stability of a set of mRNAs controlling Th17 cell differentiation. As to expression, widely expressed. Expressed at higher level in cerebellum, spleen, ovary and liver.

The protein resides in the cytoplasm. It is found in the P-body. Its subcellular location is the cytoplasmic granule. It carries out the reaction S-ubiquitinyl-[E2 ubiquitin-conjugating enzyme]-L-cysteine + [acceptor protein]-L-lysine = [E2 ubiquitin-conjugating enzyme]-L-cysteine + N(6)-ubiquitinyl-[acceptor protein]-L-lysine.. The protein operates within protein modification; protein ubiquitination. In terms of biological role, post-transcriptional repressor of mRNAs containing a conserved stem loop motif, called constitutive decay element (CDE), which is often located in the 3'-UTR, as in HMGXB3, ICOS, IER3, NFKBID, NFKBIZ, PPP1R10, TNF, TNFRSF4 and in many more mRNAs. Cleaves translationally inactive mRNAs harboring a stem-loop (SL), often located in their 3'-UTRs, during the early phase of inflammation in a helicase UPF1-independent manner. Binds to CDE and promotes mRNA deadenylation and degradation. This process does not involve miRNAs. In follicular helper T (Tfh) cells, represses of ICOS and TNFRSF4 expression, thus preventing spontaneous Tfh cell differentiation, germinal center B-cell differentiation in the absence of immunization and autoimmunity. In resting or LPS-stimulated macrophages, controls inflammation by suppressing TNF expression. Also recognizes CDE in its own mRNA and in that of paralogous RC3H2, possibly leading to feedback loop regulation. Recognizes and binds mRNAs containing a hexaloop stem-loop motif, called alternative decay element (ADE). Together with ZC3H12A, destabilizes TNFRSF4/OX40 mRNA by binding to the conserved stem loop structure in its 3'UTR. Able to interact with double-stranded RNA (dsRNA). miRNA-binding protein that regulates microRNA homeostasis. Enhances DICER-mediated processing of pre-MIR146a but reduces mature MIR146a levels through an increase of 3' end uridylation. Both inhibits ICOS mRNA expression and they may act together to exert the suppression. Acts as a ubiquitin E3 ligase. Pairs with E2 enzymes UBE2A, UBE2B, UBE2D2, UBE2F, UBE2G1, UBE2G2 and UBE2L3 and produces polyubiquitin chains. Shows the strongest activity when paired with UBE2N:UBE2V1 or UBE2N:UBE2V2 E2 complexes and generate both short and long polyubiquitin chains. This Homo sapiens (Human) protein is Roquin-1.